The primary structure comprises 153 residues: Jacalin-related lectin Calsepa (153 aa).

Ala-2 is subject to N-acetylalanine. A Jacalin-type lectin domain is found at 6-152 (DTISGPWGNN…VDAIGTYNRH (147 aa)). N-glycan binding stretches follow at residues 17-18 (GN), 95-96 (DN), and 140-144 (GYYVD).

This sequence belongs to the jacalin lectin family. As to quaternary structure, homodimer. Post-translationally, not glycosylated. In terms of tissue distribution, rhizome (at protein level). Detected in the cortex and the pith of rhizome. Not detected in vascular tissues, pericycle, endodermis or rhizodermis.

The protein resides in the cytoplasm. With respect to regulation, hemagglutinating activity is most inhibited by methyl alpha-mannopyranoside. This activity is inhibited to a less extent (about a third of the inhibition of that of methyl alpha-mannopyranoside) by methyl alpha-glucoside, other alpha-glucosides, such as maltose, isomaltose, panose or palatinose, and alpha-glucosides modified at the second position, such as methyl 2-deoxy-alpha-arabinoglucopyranoside or methyl 2-acetamido-2-deoxy alpha-glucopyranoside. Mildly inhibited by free monosaccharides, with glucose presenting at least 20-fold less inhibitory effect on hemagglutinating activity than mannose. Glycoproteins are somewhat inhibitory, the best being asialothyroglobulin and ovomucoid. Not inhibited by isomaltitol, sucrose or trehalose. In terms of biological role, mannose-binding lectin. Preferentially binds mannose at concentrations ranging between 5 and 25 mM, but also binds glucose. Has a marked preference for methylated sugar derivatives, such as alpha-MeMan and alpha-MeGlc, at concentration down to 5 mM. Binds to N-glycans, but not to glycolipid-type or other type of glycans. Binds N-linked high-mannose-type glycans. Has a preference for smaller (Man(2)-Man(6)) high-mannose-type glycans to larger (Man(7)-Man(9)) ones. Recognizes both alpha1-6 extended and alpha1-3 extended monoantennary glycans. The addition of alpha1-2Man to the Man-alpha1-3Man-beta branch results in a significant loss of affinity, but beta1-2GlcNAc has some affinity. Has less affinity for biantennary glycans. However, affinity is significant for the biantennary complex-type N-glycans with bisecting GlcNAc. No affinity is observed for tri- and tetra-antennary glycans. Binds bisected glycans of the mouse brain. Selectively binds to bisecting N-glycans which are in back-fold conformation, and does not favor a glycan with an extend conformation. Has hemagglutinating activity against rabbit erythrocytes at 0.3 ug/ml and against trypsin-treated human erythrocytes at 5 ug/ml. Has mitogenic activity in murine cells. This chain is Jacalin-related lectin Calsepa, found in Calystegia sepium (Hedge bindweed).